The following is a 116-amino-acid chain: MRNKLIELVEASQLRTDFPEFRVGDNVRVHVRIREGGKERIQIFEGLVISKKESGTRETFTVRKISFGIGVNRTFPLHSPLISAIEVVRSNKVRRAKLYYMKNRAGKSARLKEIKR.

Belongs to the bacterial ribosomal protein bL19 family.

In terms of biological role, this protein is located at the 30S-50S ribosomal subunit interface and may play a role in the structure and function of the aminoacyl-tRNA binding site. This Mycoplasmopsis agalactiae (strain NCTC 10123 / CIP 59.7 / PG2) (Mycoplasma agalactiae) protein is Large ribosomal subunit protein bL19.